The following is a 249-amino-acid chain: MEKTLKGIVLNSFDFQDYDKIITIYSNLYGKISLVCLGVNKIKSKNKYGINYLSYSNFEIFKSKNKFNLSKLKRSELINSFNHISTDFNLYLYANIITSLVLSLDEQIKNYNLYKTLKLSISIINNKSDFGLKVCVLFMFYFLKIIGNQIDLSKCGFCNSKINPIIAISFTNYCSSCKFCYFDDCILIDNQLSNFINSIFKNDFITNLSQEISTNNLNILTRFILNYYQDIVGTYTTSMYLLSTLIRFN.

This sequence belongs to the RecO family.

In terms of biological role, involved in DNA repair and RecF pathway recombination. The polypeptide is DNA repair protein RecO (Mycoplasma mycoides subsp. mycoides SC (strain CCUG 32753 / NCTC 10114 / PG1)).